The sequence spans 607 residues: Elongation factor 4 (607 aa).

The region spanning Ser11–Thr193 is the tr-type G domain. GTP-binding positions include Asp23–Thr28 and Asn140–Asp143.

The protein belongs to the TRAFAC class translation factor GTPase superfamily. Classic translation factor GTPase family. LepA subfamily.

The protein resides in the cell membrane. It carries out the reaction GTP + H2O = GDP + phosphate + H(+). Functionally, required for accurate and efficient protein synthesis under certain stress conditions. May act as a fidelity factor of the translation reaction, by catalyzing a one-codon backward translocation of tRNAs on improperly translocated ribosomes. Back-translocation proceeds from a post-translocation (POST) complex to a pre-translocation (PRE) complex, thus giving elongation factor G a second chance to translocate the tRNAs correctly. Binds to ribosomes in a GTP-dependent manner. This Bacillus cereus (strain ZK / E33L) protein is Elongation factor 4.